A 529-amino-acid polypeptide reads, in one-letter code: Putative amidohydrolase YtcJ (529 aa).

This sequence belongs to the metallo-dependent hydrolases superfamily.

The sequence is that of Putative amidohydrolase YtcJ (ytcJ) from Bacillus subtilis (strain 168).